A 512-amino-acid polypeptide reads, in one-letter code: Kelch repeat protein C2 (512 aa).

The 66-residue stretch at 2-67 (ESVIFSINGE…MRWKKINITI (66 aa)) folds into the BTB domain. Kelch repeat units lie at residues 216-261 (IKHN…LHNC), 262-307 (LYII…VNDG), 309-354 (LYVI…FVND), 356-403 (IYVM…EYDG), 405-449 (IYVI…SCGD), and 452-498 (LIIA…THKS).

It belongs to the poxviruses Kelch family.

This chain is Kelch repeat protein C2, found in Vaccinia virus (strain Copenhagen) (VACV).